Consider the following 232-residue polypeptide: Cytidylate kinase (232 aa).

Position 10 to 18 (10 to 18) interacts with ATP; that stretch reads GPAASGKST.

It belongs to the cytidylate kinase family. Type 1 subfamily.

It is found in the cytoplasm. It catalyses the reaction CMP + ATP = CDP + ADP. The enzyme catalyses dCMP + ATP = dCDP + ADP. The protein is Cytidylate kinase of Phytoplasma mali (strain AT).